The chain runs to 175 residues: Large ribosomal subunit protein uL5 (175 aa).

Belongs to the universal ribosomal protein uL5 family. As to quaternary structure, part of the 50S ribosomal subunit; contacts the 5S rRNA and probably tRNA. Forms a bridge to the 30S subunit in the 70S ribosome.

Functionally, this is one of the proteins that bind and probably mediate the attachment of the 5S RNA into the large ribosomal subunit, where it forms part of the central protuberance. In the 70S ribosome it contacts protein S13 of the 30S subunit (bridge B1b), connecting the 2 subunits; this bridge is implicated in subunit movement. May contact the P site tRNA; the 5S rRNA and some of its associated proteins might help stabilize positioning of ribosome-bound tRNAs. The sequence is that of Large ribosomal subunit protein uL5 from Halobacterium salinarum (strain ATCC 29341 / DSM 671 / R1).